A 667-amino-acid chain; its full sequence is Sterile alpha motif domain-containing protein 15 (667 aa).

Positions 1–18 are enriched in acidic residues; it reads MAEVPEDYDSGPDEDGEP. Disordered regions lie at residues 1-108 and 147-424; these read MAEV…KSER and SAME…IKSK. Basic and acidic residues-rich tracts occupy residues 19–53, 84–93, 187–196, and 228–266; these read ESER…HEPQ, IAKESKRDVP, ESLRVQHEET, and TKPD…KSSE. Positions 268 to 277 are enriched in acidic residues; it reads AGLEPPEETQ. Basic and acidic residues-rich tracts occupy residues 284–314, 322–338, 346–364, and 381–422; these read MQRK…KSTD, EEIK…KPNE, EMMK…EEKN, and PRVE…EPIK. The 64-residue stretch at 538–601 folds into the SAM domain; sequence WDPEKVAEWI…SRHTRELLEI (64 aa).

In Macaca fascicularis (Crab-eating macaque), this protein is Sterile alpha motif domain-containing protein 15 (SAMD15).